The following is a 455-amino-acid chain: Ribosomal protein uS12 methylthiotransferase RimO (455 aa).

In terms of domain architecture, MTTase N-terminal spans 30 to 140 (PTIGMVSLGC…VLDAVHGAVP (111 aa)). [4Fe-4S] cluster is bound by residues cysteine 39, cysteine 75, cysteine 104, cysteine 171, cysteine 175, and cysteine 178. Positions 157–386 (LTPRHFSYLK…MEKAQAISEA (230 aa)) constitute a Radical SAM core domain. Residues 389–455 (AAKVGRRIEV…GEYDLWGRPV (67 aa)) enclose the TRAM domain.

This sequence belongs to the methylthiotransferase family. RimO subfamily. Requires [4Fe-4S] cluster as cofactor.

It is found in the cytoplasm. The enzyme catalyses L-aspartate(89)-[ribosomal protein uS12]-hydrogen + (sulfur carrier)-SH + AH2 + 2 S-adenosyl-L-methionine = 3-methylsulfanyl-L-aspartate(89)-[ribosomal protein uS12]-hydrogen + (sulfur carrier)-H + 5'-deoxyadenosine + L-methionine + A + S-adenosyl-L-homocysteine + 2 H(+). Its function is as follows. Catalyzes the methylthiolation of an aspartic acid residue of ribosomal protein uS12. The sequence is that of Ribosomal protein uS12 methylthiotransferase RimO from Cereibacter sphaeroides (strain ATCC 17029 / ATH 2.4.9) (Rhodobacter sphaeroides).